Consider the following 164-residue polypeptide: NADH-quinone oxidoreductase subunit I (164 aa).

4Fe-4S ferredoxin-type domains are found at residues 56–85 (RRYE…IEAE) and 95–124 (TRYD…EGPN). [4Fe-4S] cluster contacts are provided by cysteine 65, cysteine 68, cysteine 71, cysteine 75, cysteine 104, cysteine 107, cysteine 110, and cysteine 114.

Belongs to the complex I 23 kDa subunit family. As to quaternary structure, NDH-1 is composed of 14 different subunits. Subunits NuoA, H, J, K, L, M, N constitute the membrane sector of the complex. [4Fe-4S] cluster is required as a cofactor.

The protein localises to the cell inner membrane. It catalyses the reaction a quinone + NADH + 5 H(+)(in) = a quinol + NAD(+) + 4 H(+)(out). Functionally, NDH-1 shuttles electrons from NADH, via FMN and iron-sulfur (Fe-S) centers, to quinones in the respiratory chain. The immediate electron acceptor for the enzyme in this species is believed to be ubiquinone. Couples the redox reaction to proton translocation (for every two electrons transferred, four hydrogen ions are translocated across the cytoplasmic membrane), and thus conserves the redox energy in a proton gradient. The polypeptide is NADH-quinone oxidoreductase subunit I (Anaplasma phagocytophilum (strain HZ)).